The primary structure comprises 1203 residues: Serine/threonine-protein kinase Nek1 (1203 aa).

One can recognise a Protein kinase domain in the interval 4 to 258; that stretch reads YVRLQKIGEG…VNSILEKGFI (255 aa). ATP-binding positions include 10–18 and lysine 33; that span reads IGEGSFGKA. The active-site Proton acceptor is aspartate 128. Threonine 156 bears the Phosphothreonine mark. The residue at position 162 (threonine 162) is a Phosphothreonine; by autocatalysis. A disordered region spans residues 329–357; it reads LLEKKPPPKHKQAHQIPVKKMNSGEERKK. Phosphoserine is present on residues serine 417 and serine 437. Threonine 615 carries the post-translational modification Phosphothreonine. Serine 618 carries the phosphoserine modification. Disordered regions lie at residues 643–662 and 674–708; these read LTDTQEEEMEKSNSAISSKR and AQEDEKEKQHHSGSCETVGHKDEREYETENAISSD. A compositionally biased stretch (basic and acidic residues) spans 674 to 683; that stretch reads AQEDEKEKQH. Residues serine 750, serine 786, serine 820, and serine 832 each carry the phosphoserine modification. Disordered stretches follow at residues 814-866 and 888-925; these read PSAT…LPPV and AVQQSEVCEDRIPGNVDQSCKDQRDPAVDDSPQSGCDV. The span at 839 to 850 shows a compositional bias: acidic residues; sequence NVEEPDDLETEV. Serine 997 carries the post-translational modification Phosphoserine. Disordered stretches follow at residues 1021–1045 and 1063–1120; these read SLEIDELEDEPIKEGPSDSEDTVFE and REQP…ETTS. Position 1071 is a phosphoserine (serine 1071).

Belongs to the protein kinase superfamily. NEK Ser/Thr protein kinase family. NIMA subfamily. In terms of assembly, binds to CBY2. Found in a complex with CFAP410, NEK1 and SPATA7. Interacts with CFAP410. Interacts (via Ser-997 phosphorylated form) with 14-3-3 proteins. It depends on Mg(2+) as a cofactor. In terms of tissue distribution, predominantly in testes (germ cells and Sertoli cells). Lower levels in ovary (oocytes and granulosa cells), thymus and lung.

The protein localises to the nucleus. Its subcellular location is the cytoplasm. The protein resides in the cytoskeleton. It localises to the microtubule organizing center. It is found in the centrosome. It carries out the reaction L-seryl-[protein] + ATP = O-phospho-L-seryl-[protein] + ADP + H(+). The catalysed reaction is L-threonyl-[protein] + ATP = O-phospho-L-threonyl-[protein] + ADP + H(+). Its function is as follows. Phosphorylates serines and threonines, but also appears to possess tyrosine kinase activity. Involved in DNA damage checkpoint control and for proper DNA damage repair. In response to injury that includes DNA damage, NEK1 phosphorylates VDAC1 to limit mitochondrial cell death. May be implicated in the control of meiosis. Involved in cilium assembly. This chain is Serine/threonine-protein kinase Nek1 (Nek1), found in Mus musculus (Mouse).